The primary structure comprises 319 residues: Lipoyl synthase (319 aa).

A disordered region spans residues 6–29; the sequence is DTVSANPVRPRHPEKAARPDALSP. A compositionally biased stretch (basic and acidic residues) spans 16-29; it reads RHPEKAARPDALSP. Positions 61, 66, 72, 87, 91, 94, and 300 each coordinate [4Fe-4S] cluster. A Radical SAM core domain is found at 73–289; it reads WDKKHATFMI…QTTAYAKGFL (217 aa).

Belongs to the radical SAM superfamily. Lipoyl synthase family. The cofactor is [4Fe-4S] cluster.

It localises to the cytoplasm. The catalysed reaction is [[Fe-S] cluster scaffold protein carrying a second [4Fe-4S](2+) cluster] + N(6)-octanoyl-L-lysyl-[protein] + 2 oxidized [2Fe-2S]-[ferredoxin] + 2 S-adenosyl-L-methionine + 4 H(+) = [[Fe-S] cluster scaffold protein] + N(6)-[(R)-dihydrolipoyl]-L-lysyl-[protein] + 4 Fe(3+) + 2 hydrogen sulfide + 2 5'-deoxyadenosine + 2 L-methionine + 2 reduced [2Fe-2S]-[ferredoxin]. It functions in the pathway protein modification; protein lipoylation via endogenous pathway; protein N(6)-(lipoyl)lysine from octanoyl-[acyl-carrier-protein]: step 2/2. Its function is as follows. Catalyzes the radical-mediated insertion of two sulfur atoms into the C-6 and C-8 positions of the octanoyl moiety bound to the lipoyl domains of lipoate-dependent enzymes, thereby converting the octanoylated domains into lipoylated derivatives. The protein is Lipoyl synthase of Rhodopseudomonas palustris (strain ATCC BAA-98 / CGA009).